A 255-amino-acid chain; its full sequence is 3-dehydroquinate dehydratase (255 aa).

3-dehydroquinate is bound by residues 47–49 (EWR) and Arg83. The active-site Proton donor/acceptor is the His144. Lys171 acts as the Schiff-base intermediate with substrate in catalysis. Arg214, Ser233, and Gln237 together coordinate 3-dehydroquinate.

This sequence belongs to the type-I 3-dehydroquinase family. Homodimer or homotetramer.

It catalyses the reaction 3-dehydroquinate = 3-dehydroshikimate + H2O. The protein operates within metabolic intermediate biosynthesis; chorismate biosynthesis; chorismate from D-erythrose 4-phosphate and phosphoenolpyruvate: step 3/7. Its function is as follows. Involved in the third step of the chorismate pathway, which leads to the biosynthesis of aromatic amino acids. Catalyzes the cis-dehydration of 3-dehydroquinate (DHQ) and introduces the first double bond of the aromatic ring to yield 3-dehydroshikimate. The reaction involves the formation of an imine intermediate between the keto group of 3-dehydroquinate and the epsilon-amino group of Lys-170 at the active site. This chain is 3-dehydroquinate dehydratase, found in Clostridioides difficile (strain 630) (Peptoclostridium difficile).